Reading from the N-terminus, the 196-residue chain is Heat shock protein beta-8 (196 aa).

Residues 1–28 (MADGQLPFPCSYPSRLRRDPFRDSPLSS) are disordered. Residues S24 and S57 each carry the phosphoserine modification. T63 bears the Phosphothreonine mark. Residues R71 and R78 each carry the asymmetric dimethylarginine modification. The sHSP domain occupies 74–185 (TATARFGVPA…PFGESSFNNE (112 aa)). A disordered region spans residues 176–196 (PFGESSFNNELPQDNQEVTCS). The segment covering 178–196 (GESSFNNELPQDNQEVTCS) has biased composition (polar residues).

Belongs to the small heat shock protein (HSP20) family. Monomer. Forms a ternary complex with BAG3 and HSPA1A. Component of the chaperone-assisted selective autophagy (CASA) complex consisting of BAG3, HSPA8/HSC70, HSPB8 and STUB1/CHIP. Interacts with HSPB1. Interacts with DNAJB6. Interacts with BAG3. Phosphorylated.

Its subcellular location is the cytoplasm. It is found in the nucleus. Functionally, involved in the chaperone-assisted selective autophagy (CASA), a crucial process for protein quality control, particularly in mechanical strained cells and tissues such as muscle. Displays temperature-dependent chaperone activity. The chain is Heat shock protein beta-8 (Hspb8) from Rattus norvegicus (Rat).